The chain runs to 327 residues: Delta(3,5)-Delta(2,4)-dienoyl-CoA isomerase, mitochondrial (327 aa).

Residues 1-33 constitute a mitochondrion transit peptide; that stretch reads MATAMTVSSKLRGLLMQQLRGTSQLYFNISLRS. Substrate is bound at residue 115 to 119; the sequence is SGIDL. Residue K147 is modified to N6-acetyllysine. A substrate-binding site is contributed by G173. K230 bears the N6-succinyllysine mark. S267 carries the post-translational modification Phosphoserine. The residue at position 316 (K316) is an N6-succinyllysine. A Microbody targeting signal motif is present at residues 325 to 327; the sequence is SKL. Position 326 is an N6-acetyllysine (K326).

Belongs to the enoyl-CoA hydratase/isomerase family. Homohexamer.

The protein localises to the mitochondrion. It localises to the peroxisome. The catalysed reaction is (3E,5Z)-octadienoyl-CoA = (2E,4E)-octadienoyl-CoA. It catalyses the reaction (3E,5Z,8Z,11Z,14Z)-eicosapentaenoyl-CoA = (2E,4E,8Z,11Z,14Z)-eicosapentaenoyl-CoA. It functions in the pathway lipid metabolism; fatty acid beta-oxidation. In terms of biological role, isomerization of 3-trans,5-cis-dienoyl-CoA to 2-trans,4-trans-dienoyl-CoA. This chain is Delta(3,5)-Delta(2,4)-dienoyl-CoA isomerase, mitochondrial, found in Mus musculus (Mouse).